A 97-amino-acid polypeptide reads, in one-letter code: Citrate lyase acyl carrier protein (97 aa).

Position 14 is an O-(phosphoribosyl dephospho-coenzyme A)serine (Ser-14).

It belongs to the CitD family. As to quaternary structure, oligomer with a subunit composition of (alpha,beta,gamma)6.

Its subcellular location is the cytoplasm. In terms of biological role, covalent carrier of the coenzyme of citrate lyase. In Escherichia fergusonii (strain ATCC 35469 / DSM 13698 / CCUG 18766 / IAM 14443 / JCM 21226 / LMG 7866 / NBRC 102419 / NCTC 12128 / CDC 0568-73), this protein is Citrate lyase acyl carrier protein.